Here is a 448-residue protein sequence, read N- to C-terminus: tRNA(Ile)-lysidine synthase (448 aa).

Serine 28–serine 33 is a binding site for ATP.

Belongs to the tRNA(Ile)-lysidine synthase family.

It is found in the cytoplasm. The catalysed reaction is cytidine(34) in tRNA(Ile2) + L-lysine + ATP = lysidine(34) in tRNA(Ile2) + AMP + diphosphate + H(+). Its function is as follows. Ligates lysine onto the cytidine present at position 34 of the AUA codon-specific tRNA(Ile) that contains the anticodon CAU, in an ATP-dependent manner. Cytidine is converted to lysidine, thus changing the amino acid specificity of the tRNA from methionine to isoleucine. The polypeptide is tRNA(Ile)-lysidine synthase (Lactiplantibacillus plantarum (strain ATCC BAA-793 / NCIMB 8826 / WCFS1) (Lactobacillus plantarum)).